The sequence spans 296 residues: MKLAILSRDGTLFSCRRLREAAQARGHKVDVIDPLSCYMNINSAAPSIHYRGRRLKHYDAVIPRIGPLTTFYGTAVLRQFEMLGSYALNESAAITRARDKLHSLQLLARQGIDLPITGFADSPDDTGDLITMVGGAPLVVKLVEGTQGIGVVLAETRQAAESVIDAFRGLKAQFLVQEFVAEAGGRDVRCLVIGDKVVAVIERHAKEGDFRSNLHRGGSARAVTISAAERAVAIHAAAALGLNVAGVDILRAKRGPLVMEVNASPGLEGIEAASDMDIATLMITFIEARLADRSSR.

Positions 104 to 287 constitute an ATP-grasp domain; that stretch reads LQLLARQGID…IATLMITFIE (184 aa). Residues Lys-141, 178 to 179, Asp-187, and 211 to 213 contribute to the ATP site; these read EF and RSN. 3 residues coordinate Mg(2+): Asp-248, Glu-260, and Asn-262. Positions 248, 260, and 262 each coordinate Mn(2+).

This sequence belongs to the RimK family. Requires Mg(2+) as cofactor. It depends on Mn(2+) as a cofactor.

This Sodalis glossinidius (strain morsitans) protein is Probable alpha-L-glutamate ligase.